The sequence spans 669 residues: Translation factor GUF1, mitochondrial (669 aa).

The transit peptide at 1–49 (MWTLAGQGWWRGRALAAWVTEAARKGLLWPHLAPARGTAAESRAPDRCY) directs the protein to the mitochondrion. The tr-type G domain maps to 66–247 (ENTRNFSIIA…AVIKRIPFPK (182 aa)). Residues 75–82 (AHVDHGKS), 140–144 (DTPGH), and 194–197 (NKID) each bind GTP.

This sequence belongs to the TRAFAC class translation factor GTPase superfamily. Classic translation factor GTPase family. LepA subfamily.

It localises to the mitochondrion inner membrane. It catalyses the reaction GTP + H2O = GDP + phosphate + H(+). Promotes mitochondrial protein synthesis. May act as a fidelity factor of the translation reaction, by catalyzing a one-codon backward translocation of tRNAs on improperly translocated ribosomes. Binds to mitochondrial ribosomes in a GTP-dependent manner. The sequence is that of Translation factor GUF1, mitochondrial from Bos taurus (Bovine).